Here is a 1108-residue protein sequence, read N- to C-terminus: Multidrug resistance regulator 1 (1108 aa).

Over residues 1–19 (MSIATTPIETPKSPKSTEP) the composition is skewed to polar residues. Positions 1–27 (MSIATTPIETPKSPKSTEPQVRKRKKV) are disordered. Positions 31 to 59 (CTNCRKRKIRCDRQHPCNNCIKSKKHNAC) form a DNA-binding region, zn(2)-C6 fungal-type. The span at 68–83 (PANFSTNGSSHGNTVP) shows a compositional bias: polar residues. 3 disordered regions span residues 68–138 (PANF…SENE), 968–990 (DQTY…LDSR), and 1021–1064 (AQQQ…YYGN). Basic and acidic residues-rich tracts occupy residues 86 to 104 (RPYE…EAPR) and 114 to 123 (NERKNSKKSP). The segment covering 124-138 (DNTVANNQQTASENE) has biased composition (polar residues). The stretch at 134–165 (ASENEVTITLSELNMLKQRLQNIEANINAQSN) forms a coiled coil. Low complexity-rich tracts occupy residues 970–980 (TYSTSSESSST) and 1023–1041 (QQRQ…QSQS).

The protein resides in the nucleus. Functionally, transcription factor that acts as the central regulator of the MDR1 efflux pump. Other target genes include those encoding oxidoreductases, whose up-regulation in fluconazole-resistant isolates may help to prevent cell damage resulting from the generation of toxic molecules in the presence of fluconazole and thereby contribute to drug resistance. This Candida albicans (strain SC5314 / ATCC MYA-2876) (Yeast) protein is Multidrug resistance regulator 1.